The sequence spans 852 residues: MSEEIREVKVLEKPWVEKYRPQRLDDIVGQEHIVKRLKHYVKTGSMPHLLFAGPPGVGKCLTGDTKVIANGQLFELGELVEKLSGGRFGPTPVKGLKVLGIDEDGKLREFEVQYVYKDRTDRLIKIKTQLGRELKVTPYHPLLVNRENGEIKWIKAEELKPGDKLAIPSFLPLITGENPLAEWLGYFMGSGYAYPSNSVITFTNEDPLIRQRFMELTEKLFPDAKIRERIHADGTPEVYVVSRKAWSLVNSISLTLIPREGWKGIRSFLRAYSDCNGRIESDAIVLSTDNNDMAQQIAYALASFGIIAKMDGEDVIISGSDNIERFLNEIGFSTQSKLKEAQKLIRKTNVRSDGLKINYELISYVKDRLRLNVNDKRNLSYRNAKELSWELMKEIYYRLEELERLKKVLSEPILIDWNEVAKKSDEVIEKAKIRAEKLLEYIKGERKPSFKEYIEIAKVLGINVERTIEAMKIFAKRYSSYAEIGRKLGTWNFNVKTILESDTVDNVEILEKIRKIELELIEEILSDGKLKEGIAYLIFLFQNELYWDEITEVKELRGDFIIYDLHVPGYHNFIAGNMPTVVHNTTAALALARELFGENWRHNFLELNASDERGINVIREKVKEFARTKPIGGASFKIIFLDEADALTQDAQQALRRTMEMFSSNVRFILSCNYSSKIIEPIQSRCAIFRFRPLRDEDIAKRLRYIAENEGLELTEEGLQAILYIAEGDMRRAINILQAAAALDKKITDENVFMVASRARPEDIREMMLLALKGNFLKAREKLREILLKQGLSGEDVLVQMHKEVFNLPIEEPKKVLLADKIGEYNFRLVEGANEIIQLEALLAQFTLIGKK.

The DOD-type homing endonuclease domain occupies Trp183–Ile306.

This sequence belongs to the activator 1 small subunits family. RfcS subfamily. As to quaternary structure, heteromultimer composed of three to four small subunits (RfcS) and one to two large subunits (RfcL). Post-translationally, this protein undergoes a protein self splicing that involves a post-translational excision of the intervening region (intein) followed by peptide ligation.

Functionally, part of the RFC clamp loader complex which loads the PCNA sliding clamp onto DNA. The complex possesses DNA-dependent ATPase activity which is further stimulated by PCNA. The polypeptide is Replication factor C small subunit (rfcS) (Pyrococcus furiosus (strain ATCC 43587 / DSM 3638 / JCM 8422 / Vc1)).